The primary structure comprises 194 residues: CASP-like protein 1B1 (194 aa).

Residues M1 to D24 are Cytoplasmic-facing. Residues W25–M45 form a helical membrane-spanning segment. Residues A46–A77 are Extracellular-facing. A helical transmembrane segment spans residues F78 to V98. Residues E99–R111 are Cytoplasmic-facing. Residues L112–A132 form a helical membrane-spanning segment. Residues A133 to G164 are Extracellular-facing. The helical transmembrane segment at V165–I185 threads the bilayer. Residues T186–I194 are Cytoplasmic-facing.

The protein belongs to the Casparian strip membrane proteins (CASP) family. Homodimer and heterodimers.

The protein resides in the cell membrane. This is CASP-like protein 1B1 from Glycine max (Soybean).